A 95-amino-acid chain; its full sequence is DNA-directed RNA polymerase subunit omega (95 aa).

It belongs to the RNA polymerase subunit omega family. As to quaternary structure, the RNAP catalytic core consists of 2 alpha, 1 beta, 1 beta' and 1 omega subunit. When a sigma factor is associated with the core the holoenzyme is formed, which can initiate transcription.

It catalyses the reaction RNA(n) + a ribonucleoside 5'-triphosphate = RNA(n+1) + diphosphate. In terms of biological role, promotes RNA polymerase assembly. Latches the N- and C-terminal regions of the beta' subunit thereby facilitating its interaction with the beta and alpha subunits. The protein is DNA-directed RNA polymerase subunit omega of Colwellia psychrerythraea (strain 34H / ATCC BAA-681) (Vibrio psychroerythus).